The primary structure comprises 546 residues: MAAVSLRLGDLVWGKLGRYPPWPGKIVNPPKDLKKPRGKKCFFVKFFGTEDHAWIKVEQLKPYHAHKEEMIKINKGKRFQQAVDAVEEFLRRAKGKDQTSSHTSADDKNRRNSSEERSRPNSGDEKRKLSLSEGKVKKNMGEGKKRVTSGSADRGSKCLKRAQEQSPRKRGRPPKDEKDLTIPESSTVKGMMAGPMAAFKWQPTATEPVKDADPHFHHFLLSQTEKPAVCYQAITKKLKICEEETGSTSIQAADSTAVNGSITPTDKKIGFLGLGLMGSGIVSNLLKMGHTVTVWNRTAEKEGARLGRTPAEVVSTCDITFACVSDPKAAKDLVLGPSGVLQGIRPGKCYVDMSTVDADTVTELAQVIVSRGGRFLEAPVSGNQQLSNDGMLVILAAGDRGLYEDCSSCFQAMGKTSFFLGEVGNAAKMMLIVNMVQGSFMATIAEGLTLAQVTGQSQQTLLDILNQGQLASIFLDQKCQNILQGNFKPDFYLKYIQKDLRLAIALGDAVNHPTPMAAAANEVYKRAKALDQSDNDMSAVYRAYIH.

Residues 8 to 66 (LGDLVWGKLGRYPPWPGKIVNPPKDLKKPRGKKCFFVKFFGTEDHAWIKVEQLKPYHAH) form the PWWP domain. Basic and acidic residues-rich tracts occupy residues 91–145 (RRAK…EGKK) and 161–181 (RAQE…KDLT). Residues 91–187 (RRAKGKDQTS…KDLTIPESST (97 aa)) are disordered. At Ser130 the chain carries Phosphoserine. Residue Lys135 forms a Glycyl lysine isopeptide (Lys-Gly) (interchain with G-Cter in SUMO2) linkage. Residue Ser166 is modified to Phosphoserine. Residues 167-179 (PRKRGRPPKDEKD) constitute a DNA-binding region (a.T hook). Residues Lys175, Lys178, Lys200, and Lys210 each participate in a glycyl lysine isopeptide (Lys-Gly) (interchain with G-Cter in SUMO2) cross-link. Residues 213 to 216 (DPHF) form an interaction with histone H3 region. Positions 215–224 (HFHHFLLSQT) are interaction with KDM1B. Glycyl lysine isopeptide (Lys-Gly) (interchain with G-Cter in SUMO2) cross-links involve residues Lys226, Lys236, Lys239, and Lys268. Residues 260–546 (GSITPTDKKI…MSAVYRAYIH (287 aa)) are dehydrogenase domain. Residue 270–284 (GFLGLGLMGSGIVSN) coordinates NAD(+). Lys301 is covalently cross-linked (Glycyl lysine isopeptide (Lys-Gly) (interchain with G-Cter in SUMO2)). Positions 355 and 498 each coordinate NAD(+). Phosphoserine is present on Ser533.

This sequence belongs to the HIBADH-related family. NP60 subfamily. In terms of assembly, homotetramere. Interacts with MAPK14. Interacts with KDM1B at nucleosomes; this interaction stimulates H3K4me1 and H3K4me2 demethylation. Binds to mononucleosomes. Interacts with GATA4; the interaction is required for a synergistic activation of GATA4 target genes transcription.

It localises to the nucleus. Its subcellular location is the chromosome. In terms of biological role, cytokine-like nuclear factor with chromatin gene reader activity involved in chromatin modification and regulation of gene expression. Acts as a nucleosome-destabilizing factor that is recruited to genes during transcriptional activation. Recognizes and binds histone H3 without a preference for specific epigenetic markers and also binds DNA. Interacts with KDM1B and promotes its histone demethylase activity by facilitating the capture of H3 tails, they form a multifunctional enzyme complex that modifies transcribed chromatin and facilitates Pol II transcription through nucleosomes. Stimulates the acetylation of 'Lys-56' of nucleosomal histone H3 (H3K56ac) by EP300. With GATA4, co-binds a defined set of heart development genes and coregulates their expression during cardiomyocyte differentiation. Regulates p38 MAP kinase activity by mediating stress activation of MAPK14/p38alpha and specifically regulating MAPK14 signaling. Indirectly promotes phosphorylation of MAPK14 and activation of ATF2. The phosphorylation of MAPK14 requires upstream activity of MAP2K4 and MAP2K6. In Mus musculus (Mouse), this protein is Cytokine-like nuclear factor N-PAC.